The sequence spans 168 residues: Group 2 truncated hemoglobin 3-1 (168 aa).

His-98 contacts heme b.

It belongs to the truncated hemoglobin family. Group II subfamily. As to quaternary structure, homodimer when ferric. Mainly expressed in root nodules, but barely in leaves, roots, stems, flowers and fruits.

Its function is as follows. Hemoglobin-like protein that exhibits an unusual concentration-independent binding of O(2) and CO. Required for general plant development and during nodulation. May promote shoot organogenesis from root explants. This Lotus japonicus (Lotus corniculatus var. japonicus) protein is Group 2 truncated hemoglobin 3-1.